The primary structure comprises 200 residues: Inner membrane-spanning protein YciB (200 aa).

The next 6 helical transmembrane spans lie at 1 to 21 (MPPL…FFAN), 37 to 57 (IGAP…IALA), 66 to 86 (LAIM…LTLW), 103 to 123 (LFGG…GYVF), 136 to 156 (KLTL…EIVW), and 167 to 187 (FKVW…MPLI).

Belongs to the YciB family.

Its subcellular location is the cell inner membrane. Plays a role in cell envelope biogenesis, maintenance of cell envelope integrity and membrane homeostasis. In Brucella melitensis biotype 1 (strain ATCC 23456 / CCUG 17765 / NCTC 10094 / 16M), this protein is Inner membrane-spanning protein YciB.